A 1103-amino-acid polypeptide reads, in one-letter code: Isoleucine--tRNA ligase (1103 aa).

A disordered region spans residues 1–25; that stretch reads MSENVYPKANEGGETAHVAPNPSFP. The 'HIGH' region signature appears at 65 to 75; sequence PFANGLPHYGH. Positions 649–653 match the 'KMSKS' region motif; the sequence is KMSKH. Lysine 652 contributes to the ATP binding site.

The protein belongs to the class-I aminoacyl-tRNA synthetase family. IleS type 2 subfamily. As to quaternary structure, monomer. It depends on Zn(2+) as a cofactor.

It localises to the cytoplasm. The enzyme catalyses tRNA(Ile) + L-isoleucine + ATP = L-isoleucyl-tRNA(Ile) + AMP + diphosphate. Its function is as follows. Catalyzes the attachment of isoleucine to tRNA(Ile). As IleRS can inadvertently accommodate and process structurally similar amino acids such as valine, to avoid such errors it has two additional distinct tRNA(Ile)-dependent editing activities. One activity is designated as 'pretransfer' editing and involves the hydrolysis of activated Val-AMP. The other activity is designated 'posttransfer' editing and involves deacylation of mischarged Val-tRNA(Ile). The chain is Isoleucine--tRNA ligase from Bifidobacterium longum (strain NCC 2705).